The sequence spans 967 residues: Leucine--tRNA ligase (967 aa).

The 'HIGH' region signature appears at 43–53 (PYLSGHLHVGH). The 'KMSKS' region motif lies at 650 to 654 (KMSKS). Lys653 serves as a coordination point for ATP.

Belongs to the class-I aminoacyl-tRNA synthetase family.

It is found in the cytoplasm. It carries out the reaction tRNA(Leu) + L-leucine + ATP = L-leucyl-tRNA(Leu) + AMP + diphosphate. The polypeptide is Leucine--tRNA ligase (Thermococcus onnurineus (strain NA1)).